Consider the following 247-residue polypeptide: Protein SODIUM POTASSIUM ROOT DEFECTIVE 3 (247 aa).

The tract at residues 130-166 is disordered; sequence GSTGQDTVATEESEASAPKRGSSGPVEEKKKSSGSGS. Residues 167 to 235 enclose the HMA domain; the sequence is DQVVVLRVSL…KVKNAQFWTP (69 aa). Cys180 and Cys183 together coordinate a metal cation.

Its subcellular location is the cytoplasm. In terms of biological role, heavy metal-associated protein involved in salt tolerance. The sequence is that of Protein SODIUM POTASSIUM ROOT DEFECTIVE 3 from Arabidopsis thaliana (Mouse-ear cress).